The chain runs to 118 residues: Holo-[acyl-carrier-protein] synthase (118 aa).

Mg(2+)-binding residues include aspartate 5 and glutamate 51.

It belongs to the P-Pant transferase superfamily. AcpS family. Requires Mg(2+) as cofactor.

It localises to the cytoplasm. It carries out the reaction apo-[ACP] + CoA = holo-[ACP] + adenosine 3',5'-bisphosphate + H(+). Its function is as follows. Transfers the 4'-phosphopantetheine moiety from coenzyme A to a Ser of acyl-carrier-protein. This chain is Holo-[acyl-carrier-protein] synthase, found in Helicobacter pylori (strain P12).